Reading from the N-terminus, the 404-residue chain is Cysteine desulfurase IscS (404 aa).

Residues 75–76, Asn-155, Gln-183, and 203–205 contribute to the pyridoxal 5'-phosphate site; these read AT and SAH. Lys-206 is modified (N6-(pyridoxal phosphate)lysine). Position 243 (Thr-243) interacts with pyridoxal 5'-phosphate. Cys-328 serves as the catalytic Cysteine persulfide intermediate. Residue Cys-328 participates in [2Fe-2S] cluster binding.

This sequence belongs to the class-V pyridoxal-phosphate-dependent aminotransferase family. NifS/IscS subfamily. As to quaternary structure, homodimer. Forms a heterotetramer with IscU, interacts with other sulfur acceptors. The cofactor is pyridoxal 5'-phosphate.

The protein resides in the cytoplasm. It carries out the reaction (sulfur carrier)-H + L-cysteine = (sulfur carrier)-SH + L-alanine. It functions in the pathway cofactor biosynthesis; iron-sulfur cluster biosynthesis. Master enzyme that delivers sulfur to a number of partners involved in Fe-S cluster assembly, tRNA modification or cofactor biosynthesis. Catalyzes the removal of elemental sulfur atoms from cysteine to produce alanine. Functions as a sulfur delivery protein for Fe-S cluster synthesis onto IscU, an Fe-S scaffold assembly protein, as well as other S acceptor proteins. In Buchnera aphidicola subsp. Acyrthosiphon pisum (strain 5A), this protein is Cysteine desulfurase IscS.